The chain runs to 349 residues: Cyclic AMP-dependent transcription factor ATF-4 (349 aa).

3 disordered regions span residues 49–75 (FSSDKAGSSEWPAMDDGLASASDTGKE), 204–271 (PPCV…TAKV), and 279–298 (KLKKMEQNKTAATRYRQKKR). Position 60 is a 4-hydroxyproline (proline 60). Threonine 212 is subject to Phosphothreonine. A phosphoserine mark is found at serine 214, serine 218, serine 223, serine 230, and serine 234. The short motif at 214-223 (SDNDSGICMS) is the BetaTrCP degron motif element. Positions 229 to 239 (GSPQHSPSTSR) are enriched in polar residues. Position 235 is a 4-hydroxyproline (proline 235). Serine 247 bears the Phosphoserine mark. Position 251 is a phosphoserine; by RPS6KA3 (serine 251). Residues lysine 258 and lysine 270 each participate in a glycyl lysine isopeptide (Lys-Gly) (interchain with G-Cter in SUMO2) cross-link. One can recognise a bZIP domain in the interval 276-339 (LDKKLKKMEQ…QYLKDLIEEV (64 aa)). Residues 278–298 (KKLKKMEQNKTAATRYRQKKR) form a basic motif region. Residues 303-339 (ALTGECKELEKKNEALKEKADSLAKEIQYLKDLIEEV) form an interaction with GABBR1 region. Residues 304–332 (LTGECKELEKKNEALKEKADSLAKEIQYL) are leucine-zipper. At lysine 309 the chain carries N6-acetyllysine.

The protein belongs to the bZIP family. As to quaternary structure, binds DNA as a homodimer and as a heterodimer. Heterodimer; heterodimerizes with CEBPB. Heterodimer; heterodimerizes with DDIT3/CHOP. Interacts with CEP290 (via an N-terminal region). Interacts with NEK6, DAPK2 (isoform 2) and ZIPK/DAPK3. Interacts (via its leucine zipper domain) with GABBR1 and GABBR2 (via their C-termini). Forms a heterodimer with TXLNG in osteoblasts. Interacts (via its DNA binding domain) with FOXO1 (C-terminal half); the interaction occurs in osteoblasts and regulates glucose homeostasis through suppression of beta-cell proliferation and a decrease in insulin production. Interacts with SATB2; the interaction results in enhanced DNA binding and transactivation by these transcription factors. Interacts with ABRAXAS2. Interacts with TRIB3, inhibiting the transactivation activity of ATF4. Interacts with DISC1; which inhibits ATF4 transcription factor activity by disrupting ATF4 dimerization and DNA-binding. Interacts with EP300/p300; EP300/p300 stabilizes ATF4 and increases its transcriptional activity independently of its catalytic activity by preventing its ubiquitination. In terms of processing, ubiquitinated by SCF(BTRC) in response to mTORC1 signal, followed by proteasomal degradation and leading to down-regulate expression of SIRT4. Interaction with EP300/p300 inhibits ubiquitination by SCF(BTRC). Post-translationally, phosphorylation at Ser-251 by RPS6KA3/RSK2 in osteoblasts enhances transactivation activity and promotes osteoblast differentiation. Phosphorylated on the betaTrCP degron motif at Ser-218, followed by phosphorylation at Thr-212, Ser-223, Ser-230, Ser-234 and Ser-247, promoting interaction with BTRC and ubiquitination. Phosphorylation is promoted by mTORC1. Phosphorylation at Ser-214 by CK2 decreases its stability. Phosphorylated by NEK6. Hydroxylated by PHD3, leading to decreased protein stability. In terms of tissue distribution, ubiquitously expressed in adults.

The protein resides in the nucleus. The protein localises to the nucleus speckle. It is found in the cytoplasm. Its subcellular location is the cell membrane. It localises to the cytoskeleton. The protein resides in the microtubule organizing center. The protein localises to the centrosome. Functionally, transcription factor that binds the cAMP response element (CRE) (consensus: 5'-GTGACGT[AC][AG]-3') and displays two biological functions, as regulator of metabolic and redox processes under normal cellular conditions, and as master transcription factor during integrated stress response (ISR). Binds to asymmetric CRE's as a heterodimer and to palindromic CRE's as a homodimer. Core effector of the ISR, which is required for adaptation to various stress such as endoplasmic reticulum (ER) stress, amino acid starvation, mitochondrial stress or oxidative stress. During ISR, ATF4 translation is induced via an alternative ribosome translation re-initiation mechanism in response to EIF2S1/eIF-2-alpha phosphorylation, and stress-induced ATF4 acts as a master transcription factor of stress-responsive genes in order to promote cell recovery. Promotes the transcription of genes linked to amino acid sufficiency and resistance to oxidative stress to protect cells against metabolic consequences of ER oxidation. Activates the transcription of NLRP1, possibly in concert with other factors in response to ER stress. Activates the transcription of asparagine synthetase (ASNS) in response to amino acid deprivation or ER stress. However, when associated with DDIT3/CHOP, the transcriptional activation of the ASNS gene is inhibited in response to amino acid deprivation. Together with DDIT3/CHOP, mediates programmed cell death by promoting the expression of genes involved in cellular amino acid metabolic processes, mRNA translation and the terminal unfolded protein response (terminal UPR), a cellular response that elicits programmed cell death when ER stress is prolonged and unresolved. Activates the expression of COX7A2L/SCAF1 downstream of the EIF2AK3/PERK-mediated unfolded protein response, thereby promoting formation of respiratory chain supercomplexes and increasing mitochondrial oxidative phosphorylation. Together with DDIT3/CHOP, activates the transcription of the IRS-regulator TRIB3 and promotes ER stress-induced neuronal cell death by regulating the expression of BBC3/PUMA in response to ER stress. May cooperate with the UPR transcriptional regulator QRICH1 to regulate ER protein homeostasis which is critical for cell viability in response to ER stress. In the absence of stress, ATF4 translation is at low levels and it is required for normal metabolic processes such as embryonic lens formation, fetal liver hematopoiesis, bone development and synaptic plasticity. Acts as a regulator of osteoblast differentiation in response to phosphorylation by RPS6KA3/RSK2: phosphorylation in osteoblasts enhances transactivation activity and promotes expression of osteoblast-specific genes and post-transcriptionally regulates the synthesis of Type I collagen, the main constituent of the bone matrix. Cooperates with FOXO1 in osteoblasts to regulate glucose homeostasis through suppression of beta-cell production and decrease in insulin production. Activates transcription of SIRT4. Regulates the circadian expression of the core clock component PER2 and the serotonin transporter SLC6A4. Binds in a circadian time-dependent manner to the cAMP response elements (CRE) in the SLC6A4 and PER2 promoters and periodically activates the transcription of these genes. Mainly acts as a transcriptional activator in cellular stress adaptation, but it can also act as a transcriptional repressor: acts as a regulator of synaptic plasticity by repressing transcription, thereby inhibiting induction and maintenance of long-term memory. Regulates synaptic functions via interaction with DISC1 in neurons, which inhibits ATF4 transcription factor activity by disrupting ATF4 dimerization and DNA-binding. The chain is Cyclic AMP-dependent transcription factor ATF-4 from Mus musculus (Mouse).